The sequence spans 25 residues: Small ribosomal subunit protein eS32 (25 aa).

The interval 1-25 (MRAKWRKKRVRRLKRKRRKVRARSK) is disordered.

It belongs to the eukaryotic ribosomal protein eS32 family. Component of the small ribosomal subunit.

This chain is Small ribosomal subunit protein eS32 (RPL41), found in Eremothecium gossypii (strain ATCC 10895 / CBS 109.51 / FGSC 9923 / NRRL Y-1056) (Yeast).